The chain runs to 298 residues: Probable 2-(5''-triphosphoribosyl)-3'-dephosphocoenzyme-A synthase 2 (298 aa).

This sequence belongs to the CitG/MdcB family.

The enzyme catalyses 3'-dephospho-CoA + ATP = 2'-(5''-triphospho-alpha-D-ribosyl)-3'-dephospho-CoA + adenine. This Salmonella choleraesuis (strain SC-B67) protein is Probable 2-(5''-triphosphoribosyl)-3'-dephosphocoenzyme-A synthase 2.